The following is a 728-amino-acid chain: Diacylglycerol kinase 1 (728 aa).

The helical transmembrane segment at 27 to 48 (GLMFSCFVAALVGILTIAYTAF) threads the bilayer. 2 Phorbol-ester/DAG-type zinc fingers span residues 79–137 (PHSW…PKDC) and 149–212 (VHQW…GDIC). Disordered stretches follow at residues 265 to 296 (KQTN…PTVN) and 308 to 336 (VMNG…TGSF). Residues 267 to 294 (TNETSADTGNSGSNCDESTESTADTGPT) show a composition bias toward polar residues. Residues 310-319 (NGDSSNGDSD) show a composition bias toward low complexity. The region spanning 357 to 496 (SDARPLLVFI…LDRWKVSILN (140 aa)) is the DAGKc domain. Glycyl lysine isopeptide (Lys-Gly) (interchain with G-Cter in ubiquitin) cross-links involve residues K491 and K500.

Belongs to the eukaryotic diacylglycerol kinase family. In terms of assembly, monomer. As to expression, expressed in roots, shoots, and leaves.

It localises to the membrane. It carries out the reaction a 1,2-diacyl-sn-glycerol + ATP = a 1,2-diacyl-sn-glycero-3-phosphate + ADP + H(+). Phosphorylates the second messenger diacylglycerol (DAG) to generate phosphatidic acid (PA), another important signaling molecule. PA is required for plant development and responses to abiotic stress and pathogen attack. May be involved in the accumulation of PA during cold stress. This is Diacylglycerol kinase 1 (DGK1) from Arabidopsis thaliana (Mouse-ear cress).